A 1267-amino-acid polypeptide reads, in one-letter code: RNA-directed RNA polymerase lambda-3 (1267 aa).

The RdRp catalytic domain occupies 555–792 (LSPTSGSAVI…KLYFIFGCRI (238 aa)).

Belongs to the reoviridae RNA-directed RNA polymerase family.

The protein localises to the virion. It catalyses the reaction RNA(n) + a ribonucleoside 5'-triphosphate = RNA(n+1) + diphosphate. RNA-directed RNA polymerase that is involved in transcription and genome replication. Following infection, it catalyzes the synthesis of fully conservative plus strands. After core assembly, which consists in recruitment of one capped plus-strand for each genomic segments and polymerase complexes, the polymerase switches mode and catalyzes the synthesis of complementary minus-strands. The protein is RNA-directed RNA polymerase lambda-3 (L1) of Reovirus type 3 (strain Dearing) (T3D).